Consider the following 89-residue polypeptide: MDIQLINIGFGNIVSANRVIAIVSPESAPIKRIISDARDKGCLIDATYGRRTRAVIITDSSHVVLSAIQPETVAHRFVVNKEAPVNSSN.

The protein belongs to the RemA family.

This chain is Putative regulatory protein MAE_11840, found in Microcystis aeruginosa (strain NIES-843 / IAM M-2473).